A 311-amino-acid polypeptide reads, in one-letter code: Putative prophage capsid protein YqbE (311 aa).

It belongs to the encapsulin family. Family 3 subfamily.

Its function is as follows. Possibly a prophage capsid protein. The sequence is that of Putative prophage capsid protein YqbE (yqbE) from Bacillus subtilis (strain 168).